The sequence spans 982 residues: Serine/threonine-protein kinase SULU (982 aa).

Residues 30–289 (YQDLREIGHG…AEECFRHPFI (260 aa)) enclose the Protein kinase domain. ATP is bound by residues 36-44 (IGHGSFGAV) and lysine 59. The Proton acceptor role is filled by aspartate 153. Disordered regions lie at residues 331-484 (GKEG…PLDT), 592-620 (QNNE…QNQQ), 751-789 (LETQ…RDLK), and 957-982 (RTGS…QMAM). The span at 353 to 373 (SIGRAGDSASSRSASLTSFRS) shows a compositional bias: low complexity. A compositionally biased stretch (polar residues) spans 421-431 (QMLSSTSTSGV). The span at 459-472 (IPTSQPTSKSESSS) shows a compositional bias: low complexity. Positions 595 to 608 (ELDKRKKDIEDGEK) are enriched in basic and acidic residues. Residues 759–768 (SASQNEYTQR) show a composition bias toward polar residues. A compositionally biased stretch (low complexity) spans 957–967 (RTGSTSRSSGG). Polar residues predominate over residues 973-982 (GNSSSIQMAM).

The protein belongs to the protein kinase superfamily. Ser/Thr protein kinase family. STE20 subfamily. Mg(2+) is required as a cofactor. In terms of tissue distribution, expressed in the pharynx, including the pharyngeal muscle of the metacorpus, the isthmus, and the terminal bulb; in the intestine, including the pharyngeointestinal valve between the pharynx and the intestine, a structure near the anus likely to be the anal sphincter and the excretory cell and in several ring neurons.

It localises to the cytoplasm. It is found in the cytoskeleton. The protein resides in the cell cortex. It carries out the reaction L-seryl-[protein] + ATP = O-phospho-L-seryl-[protein] + ADP + H(+). The enzyme catalyses L-threonyl-[protein] + ATP = O-phospho-L-threonyl-[protein] + ADP + H(+). Its function is as follows. Acts as a negative regulator of cortical contractions during early embryonic cell division, possibly by regulating rho-1-dependent actomyosin contractility. Plays a role in polarity establishment in early embryos by regulating the size of the anterior and posterior cortex in the first asymmetric cell division. Might play a role in cell cycle progression. In the germline, involved in the regulation of meiotic progression during oogenesis, possibly by modulating the timing of mpk-1 activation. Plays a role in meiotic recombination events. Involved in pharyngeal pumping. This chain is Serine/threonine-protein kinase SULU (kin-18), found in Caenorhabditis elegans.